The following is a 316-amino-acid chain: 1-phosphofructokinase (316 aa).

ATP-binding positions include 225–230 and 256–257; these read SMGAGG and GD. Residue Asp257 is the Proton acceptor of the active site.

This sequence belongs to the carbohydrate kinase PfkB family.

The enzyme catalyses beta-D-fructose 1-phosphate + ATP = beta-D-fructose 1,6-bisphosphate + ADP + H(+). Functionally, catalyzes the ATP-dependent phosphorylation of fructose-l-phosphate to fructose-l,6-bisphosphate. The chain is 1-phosphofructokinase from Rhodobacter capsulatus (Rhodopseudomonas capsulata).